The chain runs to 183 residues: Glutathione-regulated potassium-efflux system ancillary protein KefG (183 aa).

The protein belongs to the NAD(P)H dehydrogenase (quinone) family. KefG subfamily. In terms of assembly, interacts with KefB.

The protein localises to the cell inner membrane. It catalyses the reaction a quinone + NADH + H(+) = a quinol + NAD(+). It carries out the reaction a quinone + NADPH + H(+) = a quinol + NADP(+). Its function is as follows. Regulatory subunit of a potassium efflux system that confers protection against electrophiles. Required for full activity of KefB. The chain is Glutathione-regulated potassium-efflux system ancillary protein KefG from Yersinia pestis bv. Antiqua (strain Angola).